The following is a 120-amino-acid chain: uncharacterized protein (120 aa).

It to phage T4 y06Q.

This is an uncharacterized protein from Escherichia coli (strain K12).